The following is a 114-amino-acid chain: PDZK1-interacting protein 1 (114 aa).

Topologically, residues Met-1–Gln-28 are extracellular. Residues Pro-29 to Asn-51 traverse the membrane as a helical segment. Over His-52–Met-114 the chain is Cytoplasmic. Ser-85 carries the post-translational modification Phosphoserine.

It belongs to the PDZK1-interacting protein 1/SMIM24 family. In terms of assembly, forms a heterodimer (via N-terminal transmembrane helix) with SLC5A2/SGLT2 (via TM13); this interaction enhances SLC5A2 transporter activity. Interacts with PDZK1.

It localises to the apical cell membrane. In terms of biological role, auxiliary protein of electrogenic Na(+)-coupled sugar symporter SLC5A2/SGLT2 and SLC5A1/SGLT1. Essential for the transporter activity of SLC5A2/SGLT2 but not SLC5A1/SGLT1. This is PDZK1-interacting protein 1 from Bos taurus (Bovine).